The sequence spans 179 residues: Large ribosomal subunit protein uL5 (179 aa).

Belongs to the universal ribosomal protein uL5 family. Part of the 50S ribosomal subunit; part of the 5S rRNA/L5/L18/L25 subcomplex. Contacts the 5S rRNA and the P site tRNA. Forms a bridge to the 30S subunit in the 70S ribosome.

Functionally, this is one of the proteins that bind and probably mediate the attachment of the 5S RNA into the large ribosomal subunit, where it forms part of the central protuberance. In the 70S ribosome it contacts protein S13 of the 30S subunit (bridge B1b), connecting the 2 subunits; this bridge is implicated in subunit movement. Contacts the P site tRNA; the 5S rRNA and some of its associated proteins might help stabilize positioning of ribosome-bound tRNAs. This is Large ribosomal subunit protein uL5 from Geobacter sulfurreducens (strain ATCC 51573 / DSM 12127 / PCA).